Consider the following 104-residue polypeptide: Protein ArtA (104 aa).

The sequence is that of Protein ArtA (artA) from Escherichia coli (strain K12).